We begin with the raw amino-acid sequence, 337 residues long: Monoacylglycerol lipase abhd6-B (337 aa).

Over Met-1–Pro-19 the chain is Extracellular. The helical; Signal-anchor for type II membrane protein transmembrane segment at Leu-20–Trp-42 threads the bilayer. Residues Arg-43–Asp-337 are Cytoplasmic-facing. The region spanning Pro-72 to Pro-313 is the AB hydrolase-1 domain. The Nucleophile role is filled by Ser-148. Catalysis depends on charge relay system residues Asp-278 and His-306.

The protein belongs to the AB hydrolase superfamily.

The protein localises to the late endosome membrane. The protein resides in the lysosome membrane. It localises to the mitochondrion membrane. It carries out the reaction Hydrolyzes glycerol monoesters of long-chain fatty acids.. The enzyme catalyses 1-octanoylglycerol + H2O = octanoate + glycerol + H(+). It catalyses the reaction 1-decanoylglycerol + H2O = decanoate + glycerol + H(+). The catalysed reaction is 1-dodecanoylglycerol + H2O = dodecanoate + glycerol + H(+). It carries out the reaction 1-tetradecanoylglycerol + H2O = tetradecanoate + glycerol + H(+). The enzyme catalyses 2-hexadecanoylglycerol + H2O = glycerol + hexadecanoate + H(+). It catalyses the reaction 2-(9Z-octadecenoyl)-glycerol + H2O = glycerol + (9Z)-octadecenoate + H(+). The catalysed reaction is 1-(9Z-octadecenoyl)-glycerol + H2O = glycerol + (9Z)-octadecenoate + H(+). It carries out the reaction 2-(9Z,12Z-octadecadienoyl)-glycerol + H2O = (9Z,12Z)-octadecadienoate + glycerol + H(+). The enzyme catalyses 2-(5Z,8Z,11Z,14Z-eicosatetraenoyl)-glycerol + H2O = glycerol + (5Z,8Z,11Z,14Z)-eicosatetraenoate + H(+). It catalyses the reaction 1-(5Z,8Z,11Z,14Z-eicosatetraenoyl)-glycerol + H2O = glycerol + (5Z,8Z,11Z,14Z)-eicosatetraenoate + H(+). The catalysed reaction is 1-(9Z,12Z-octadecadienoyl)-glycerol + H2O = (9Z,12Z)-octadecadienoate + glycerol + H(+). It carries out the reaction 3-(9Z-octadecenoyl)-sn-glycero-1-phospho-(3'-(9Z-octadecenoyl)-1'-sn-glycerol) + H2O = 3-(9Z-octadecenoyl)-sn-glycero-1-phospho-(1'-sn-glycerol) + (9Z)-octadecenoate + H(+). The enzyme catalyses (S,S)-2-(9Z-octadecenoyl)-sn-glycero-1-phospho-(2'-(9Z-octadecenoyl)-1'-sn-glycerol) + H2O = (S,S)-2-(9Z-octadecenoyl)-sn-glycero-1-phospho-(1'-sn-glycerol) + (9Z)-octadecenoate + H(+). It catalyses the reaction (R,R)-2-(9Z-octadecenoyl)-sn-glycero-3-phospho-(2'-(9Z-octadecenoyl)-3'-sn-glycerol) + H2O = (R,R)-2-(9Z-octadecenoyl)-sn-glycero-3-phospho-(3'-sn-glycerol) + (9Z)-octadecenoate + H(+). Functionally, lipase that preferentially hydrolysis medium-chain saturated monoacylglycerols including 2-arachidonoylglycerol. Through 2-arachidonoylglycerol degradation may regulate endocannabinoid signaling pathways. Also has a lysophosphatidyl lipase activity with a preference for lysophosphatidylglycerol among other lysophospholipids. Also able to degrade bis(monoacylglycero)phosphate (BMP) and constitutes the major enzyme for BMP catabolism. BMP, also known as lysobisphosphatidic acid, is enriched in late endosomes and lysosomes and plays a key role in the formation of intraluminal vesicles and in lipid sorting. In Xenopus laevis (African clawed frog), this protein is Monoacylglycerol lipase abhd6-B (abhd6-b).